A 146-amino-acid polypeptide reads, in one-letter code: Hemoglobin subunit beta (146 aa).

The region spanning 2–146 (PFSAHEEKLI…VAAALSVEYY (145 aa)) is the Globin domain. Residues histidine 63 and histidine 92 each contribute to the heme b site.

The protein belongs to the globin family. Heterotetramer of two alpha chains and two beta chains. When oxygenated in vitro, exists virtually only in polymeric form. When deoxygenated, forms tetramers, octamers and larger polymers. In terms of tissue distribution, red blood cells.

Involved in oxygen transport from the lung to the various peripheral tissues. The sequence is that of Hemoglobin subunit beta from Paleosuchus palpebrosus (Cuvier's smooth-fronted caiman).